The following is a 109-amino-acid chain: Phosphoribosyl-AMP cyclohydrolase (109 aa).

D80 is a Mg(2+) binding site. Position 81 (C81) interacts with Zn(2+). The Mg(2+) site is built by D82 and D84. Residues C97 and C104 each contribute to the Zn(2+) site.

This sequence belongs to the PRA-CH family. In terms of assembly, homodimer. Mg(2+) serves as cofactor. It depends on Zn(2+) as a cofactor.

Its subcellular location is the cytoplasm. It catalyses the reaction 1-(5-phospho-beta-D-ribosyl)-5'-AMP + H2O = 1-(5-phospho-beta-D-ribosyl)-5-[(5-phospho-beta-D-ribosylamino)methylideneamino]imidazole-4-carboxamide. Its pathway is amino-acid biosynthesis; L-histidine biosynthesis; L-histidine from 5-phospho-alpha-D-ribose 1-diphosphate: step 3/9. Catalyzes the hydrolysis of the adenine ring of phosphoribosyl-AMP. The chain is Phosphoribosyl-AMP cyclohydrolase from Clostridium botulinum (strain Alaska E43 / Type E3).